The sequence spans 510 residues: Beta-glucosidase 26 (510 aa).

The first 27 residues, 1 to 27 (MRKFIAALRLALAAAAHLLLTLPPAQC), serve as a signal peptide directing secretion. Residue Q59 participates in a beta-D-glucoside binding. N-linked (GlcNAc...) asparagine glycosylation is found at N87 and N127. A beta-D-glucoside-binding positions include H160 and 205–206 (NE). E206 (proton donor) is an active-site residue. The cysteines at positions 225 and 228 are disulfide-linked. N233 carries an N-linked (GlcNAc...) asparagine glycan. A beta-D-glucoside contacts are provided by Y345 and E416. E416 serves as the catalytic Nucleophile. N-linked (GlcNAc...) asparagine glycosylation is present at N424. Residues W463, 470–471 (EW), and F479 each bind a beta-D-glucoside.

This sequence belongs to the glycosyl hydrolase 1 family.

The catalysed reaction is Hydrolysis of terminal, non-reducing beta-D-glucosyl residues with release of beta-D-glucose.. Its function is as follows. Hydrolyzes p-nitrophenyl beta-D-glucoside, p-nitrophenyl beta-D-mannoside, p-nitrophenyl beta-D-galactoside, p-nitrophenyl beta-D-xyloside, p-nitrophenyl beta-D-fucoside, p-nitrophenyl beta-L-arabinoside, cello-oligosaccharides, laminari-oligosaccharides and sophorose. The sequence is that of Beta-glucosidase 26 (BGLU26) from Oryza sativa subsp. japonica (Rice).